We begin with the raw amino-acid sequence, 139 residues long: Cytochrome c-type biogenesis protein CcmE 2 (139 aa).

Topologically, residues 1-9 are cytoplasmic; that stretch reads MASLKKSRR. The chain crosses the membrane as a helical; Signal-anchor for type II membrane protein span at residues 10–30; that stretch reads VRLILFSGVALVSATALIGYA. Residues 31-139 lie on the Periplasmic side of the membrane; that stretch reads MRDGIQFFRT…ELAEMEALRD (109 aa). Residues His122 and Tyr126 each contribute to the heme site.

Belongs to the CcmE/CycJ family.

It is found in the cell inner membrane. In terms of biological role, heme chaperone required for the biogenesis of c-type cytochromes. Transiently binds heme delivered by CcmC and transfers the heme to apo-cytochromes in a process facilitated by CcmF and CcmH. The protein is Cytochrome c-type biogenesis protein CcmE 2 of Ruegeria pomeroyi (strain ATCC 700808 / DSM 15171 / DSS-3) (Silicibacter pomeroyi).